A 313-amino-acid polypeptide reads, in one-letter code: Protein KRE1 (313 aa).

Positions 1–26 (MMRRTLLHSFATLLLSLSLWSAAVMA) are cleaved as a signal peptide. Repeat unit 1 spans residues 72–86 (TTTNDVGTTVTLTQT). The interval 72–141 (TTTNDVGTTV…LGTTVTLTQT (70 aa)) is 2 X approximate repeats. The disordered stretch occupies residues 94–114 (PTTTTSTSSTGKTTTTVPTAT). Repeat 2 spans residues 127 to 141 (TTTNDLGTTVTLTQT). The segment covering 147–181 (TSATSSASSSVSSSVSSSGSSSSVKTTTSTGSAVA) has biased composition (low complexity). The interval 147–198 (TSATSSASSSVSSSVSSSGSSSSVKTTTSTGSAVAETGTRPDPSTDFTEPPV) is disordered. The GPI-anchor amidated asparagine moiety is linked to residue Asn288. A propeptide spans 289–313 (EAQHLGMSSFTSILGGLLTVLIWFL) (removed in mature form).

Belongs to the KRE1 family. In terms of processing, extensively modified; probably through addition of O-linked mannose residues. The GPI-anchor is attached to the protein in the endoplasmic reticulum and serves to target the protein to the cell surface. There, the glucosamine-inositol phospholipid moiety is cleaved off and the GPI-modified mannoprotein is covalently attached via its lipidless GPI glycan remnant to the 1,6-beta-glucan of the outer cell wall layer.

Its subcellular location is the cell membrane. The protein resides in the secreted. It is found in the cell wall. Functionally, involved in a late stage of cell wall 1,6-beta-glucan synthesis and assembly. Has a structural, rather than enzymic, function within cell wall 1,6-beta-glucan assembly and architecture, possibly by being involved in covalently cross-linking 1,6-beta-glucans to other cell wall components such as 1,3-beta-glucan, chitin and certain mannoproteins. Acts as the plasma membrane receptor for the yeast K1 viral toxin. The chain is Protein KRE1 (KRE1) from Saccharomyces cerevisiae (strain ATCC 204508 / S288c) (Baker's yeast).